The following is an 824-amino-acid chain: Translation initiation factor IF-2 (824 aa).

Disordered regions lie at residues 1–32 (MSDTDGKKTLGLRGGAPRPGNVKQSFSHGRTK) and 45–232 (VPKA…MGGQ). The segment covering 45–57 (VPKAGATTSAGGK) has biased composition (low complexity). Over residues 86–144 (KAREAEEEAARIAEEKARAEERERRRAEQEERERAEREREESLKAKAEEDKRRKDEAEA) the composition is skewed to basic and acidic residues. The span at 145–167 (AAKAAAAPAAEPVVQRPAAKAAP) shows a compositional bias: low complexity. Basic and acidic residues predominate over residues 170 to 193 (APRKQQDRDRDNKRGGKGNDDSRR). The tr-type G domain maps to 321-489 (TRPPVVTIMG…AIALQAEILE (169 aa)). The G1 stretch occupies residues 330 to 337 (GHVDHGKT). 330–337 (GHVDHGKT) is a binding site for GTP. A G2 region spans residues 355 to 359 (GITQH). The segment at 377 to 380 (DTPG) is G3. Residues 377–381 (DTPGH) and 431–434 (NKID) each bind GTP. Residues 431–434 (NKID) are G4. The G5 stretch occupies residues 467-469 (SAI).

This sequence belongs to the TRAFAC class translation factor GTPase superfamily. Classic translation factor GTPase family. IF-2 subfamily.

The protein resides in the cytoplasm. Its function is as follows. One of the essential components for the initiation of protein synthesis. Protects formylmethionyl-tRNA from spontaneous hydrolysis and promotes its binding to the 30S ribosomal subunits. Also involved in the hydrolysis of GTP during the formation of the 70S ribosomal complex. This is Translation initiation factor IF-2 from Roseobacter denitrificans (strain ATCC 33942 / OCh 114) (Erythrobacter sp. (strain OCh 114)).